The following is a 99-amino-acid chain: Leydig cell tumor 10 kDa protein homolog (99 aa).

The segment at 1-36 (MAQGQRKFQAHKPAKSKTAAAASEKNRGPRKGGRVI) is disordered.

It belongs to the UPF0390 family.

May have a potential role in hypercalcemia of malignancy. The polypeptide is Leydig cell tumor 10 kDa protein homolog (C19orf53) (Homo sapiens (Human)).